A 144-amino-acid chain; its full sequence is Transcriptional regulator MraZ (144 aa).

SpoVT-AbrB domains are found at residues 4 to 47 (EYKN…TADK) and 77 to 120 (AQEI…DLKQ).

The protein belongs to the MraZ family. As to quaternary structure, forms oligomers.

The protein localises to the cytoplasm. It localises to the nucleoid. This chain is Transcriptional regulator MraZ, found in Treponema denticola (strain ATCC 35405 / DSM 14222 / CIP 103919 / JCM 8153 / KCTC 15104).